The following is a 136-amino-acid chain: Small ribosomal subunit protein eS17B (136 aa).

The protein belongs to the eukaryotic ribosomal protein eS17 family. Component of the small ribosomal subunit (SSU). Mature yeast ribosomes consist of a small (40S) and a large (60S) subunit. The 40S small subunit contains 1 molecule of ribosomal RNA (18S rRNA) and 33 different proteins (encoded by 57 genes). The large 60S subunit contains 3 rRNA molecules (25S, 5.8S and 5S rRNA) and 46 different proteins (encoded by 81 genes).

It localises to the cytoplasm. Component of the ribosome, a large ribonucleoprotein complex responsible for the synthesis of proteins in the cell. The small ribosomal subunit (SSU) binds messenger RNAs (mRNAs) and translates the encoded message by selecting cognate aminoacyl-transfer RNA (tRNA) molecules. The large subunit (LSU) contains the ribosomal catalytic site termed the peptidyl transferase center (PTC), which catalyzes the formation of peptide bonds, thereby polymerizing the amino acids delivered by tRNAs into a polypeptide chain. The nascent polypeptides leave the ribosome through a tunnel in the LSU and interact with protein factors that function in enzymatic processing, targeting, and the membrane insertion of nascent chains at the exit of the ribosomal tunnel. The sequence is that of Small ribosomal subunit protein eS17B from Saccharomyces cerevisiae (strain ATCC 204508 / S288c) (Baker's yeast).